The sequence spans 175 residues: NADH-ubiquinone oxidoreductase chain 6 (175 aa).

The next 6 membrane-spanning stretches (helical) occupy residues methionine 1–serine 21, serine 25–methionine 45, phenylalanine 47–valine 67, alanine 87–valine 107, valine 116–phenylalanine 136, and tyrosine 149–leucine 169.

The protein belongs to the complex I subunit 6 family. As to quaternary structure, core subunit of respiratory chain NADH dehydrogenase (Complex I) which is composed of 45 different subunits.

Its subcellular location is the mitochondrion inner membrane. The enzyme catalyses a ubiquinone + NADH + 5 H(+)(in) = a ubiquinol + NAD(+) + 4 H(+)(out). Core subunit of the mitochondrial membrane respiratory chain NADH dehydrogenase (Complex I) which catalyzes electron transfer from NADH through the respiratory chain, using ubiquinone as an electron acceptor. Essential for the catalytic activity and assembly of complex I. This chain is NADH-ubiquinone oxidoreductase chain 6 (MT-ND6), found in Ceratotherium simum (White rhinoceros).